Reading from the N-terminus, the 271-residue chain is Chitinase 6 (271 aa).

The first 20 residues, 1–20 (MARRLSLLAVVLAMVAAVSA), serve as a signal peptide directing secretion. Residues 25 to 60 (AQSCGCASDQCCSKWGFCGTGSDYCGTGCQAGPCDV) form the Chitin-binding type-1 domain. Intrachain disulfides connect Cys28-Cys36, Cys30-Cys42, Cys35-Cys49, Cys88-Cys137, Cys150-Cys159, and Cys239-Cys271. The active-site Proton donor is the Glu132. A glycan (N-linked (GlcNAc...) asparagine) is linked at Asn268.

Belongs to the glycosyl hydrolase 19 family. Chitinase class IV subfamily. Expressed in roots, leaves, sheaths and meristems.

The enzyme catalyses Random endo-hydrolysis of N-acetyl-beta-D-glucosaminide (1-&gt;4)-beta-linkages in chitin and chitodextrins.. May function in reproductive organs during embryogenesis and seed maturation. The protein is Chitinase 6 (Cht6) of Oryza sativa subsp. japonica (Rice).